A 262-amino-acid polypeptide reads, in one-letter code: Zinc finger protein ehn-3 (262 aa).

4 consecutive C2H2-type zinc fingers follow at residues 2 to 24 (EKCD…KVMH), 30 to 52 (FECQ…MMTH), 59 to 84 (FECP…DSEH), and 92 to 115 (AKCK…HTAH). Residues 179-204 (SVKSAKELSPTPSTEIETPEEEELDG) form a disordered region. A compositionally biased stretch (low complexity) spans 185–194 (ELSPTPSTEI). Acidic residues predominate over residues 195–204 (ETPEEEELDG). C2H2-type zinc fingers lie at residues 208-230 (WYCD…SGLH) and 236-260 (FKCS…YANH).

The protein belongs to the krueppel C2H2-type zinc-finger protein family.

It localises to the nucleus. Together with the zinc finger protein ztf-16, plays a role in gonadogenesis, specifically in somatic gonad precursor cell development. This is possibly by regulating tra-1 gene expression. Its function is as follows. Required for proper gonadal primordium assembly and somatic gonad precursor cell morphology. This is Zinc finger protein ehn-3 from Caenorhabditis elegans.